The following is a 457-amino-acid chain: Bifunctional protein GlmU (457 aa).

The interval 1–230 (MSKRYAVVLA…FEESLGVNDR (230 aa)) is pyrophosphorylase. Residues 9–12 (LAAG), Lys23, Gln73, and 78–79 (GT) each bind UDP-N-acetyl-alpha-D-glucosamine. Asp103 serves as a coordination point for Mg(2+). 4 residues coordinate UDP-N-acetyl-alpha-D-glucosamine: Gly140, Glu155, Asn170, and Asn228. Residue Asn228 coordinates Mg(2+). Positions 231-251 (IALAEASKLMQRRINENHMRN) are linker. The interval 252 to 457 (GVTLVNPEST…GYAKHLNHGK (206 aa)) is N-acetyltransferase. 2 residues coordinate UDP-N-acetyl-alpha-D-glucosamine: Arg333 and Lys351. His363 functions as the Proton acceptor in the catalytic mechanism. Tyr366 and Asn377 together coordinate UDP-N-acetyl-alpha-D-glucosamine. Residues 386-387 (NY), Ala423, and Arg440 each bind acetyl-CoA.

In the N-terminal section; belongs to the N-acetylglucosamine-1-phosphate uridyltransferase family. This sequence in the C-terminal section; belongs to the transferase hexapeptide repeat family. In terms of assembly, homotrimer. Mg(2+) is required as a cofactor.

It localises to the cytoplasm. The enzyme catalyses alpha-D-glucosamine 1-phosphate + acetyl-CoA = N-acetyl-alpha-D-glucosamine 1-phosphate + CoA + H(+). It carries out the reaction N-acetyl-alpha-D-glucosamine 1-phosphate + UTP + H(+) = UDP-N-acetyl-alpha-D-glucosamine + diphosphate. The protein operates within nucleotide-sugar biosynthesis; UDP-N-acetyl-alpha-D-glucosamine biosynthesis; N-acetyl-alpha-D-glucosamine 1-phosphate from alpha-D-glucosamine 6-phosphate (route II): step 2/2. It functions in the pathway nucleotide-sugar biosynthesis; UDP-N-acetyl-alpha-D-glucosamine biosynthesis; UDP-N-acetyl-alpha-D-glucosamine from N-acetyl-alpha-D-glucosamine 1-phosphate: step 1/1. It participates in bacterial outer membrane biogenesis; LPS lipid A biosynthesis. In terms of biological role, catalyzes the last two sequential reactions in the de novo biosynthetic pathway for UDP-N-acetylglucosamine (UDP-GlcNAc). The C-terminal domain catalyzes the transfer of acetyl group from acetyl coenzyme A to glucosamine-1-phosphate (GlcN-1-P) to produce N-acetylglucosamine-1-phosphate (GlcNAc-1-P), which is converted into UDP-GlcNAc by the transfer of uridine 5-monophosphate (from uridine 5-triphosphate), a reaction catalyzed by the N-terminal domain. The sequence is that of Bifunctional protein GlmU from Listeria monocytogenes serotype 4a (strain HCC23).